A 348-amino-acid chain; its full sequence is uncharacterized protein (348 aa).

This is an uncharacterized protein from Sulfolobus islandicus filamentous virus (isolate Iceland/Hveragerdi) (SIFV).